The sequence spans 352 residues: Cobalt transport protein NhlF (352 aa).

8 consecutive transmembrane segments (helical) span residues 23-43 (LASVVGAIVILHVLGVALYLG), 46-66 (GNPAAAGGLAGSGVLAYVLGV), 95-115 (VGFFFAMGHSTVVVVLALVVA), 131-151 (EIGGLVATVVAVTFLSIVAGL), 206-226 (PVGLLMGLGLETASEVTLLTL), 230-250 (AATGGTLSIAAVLSLPLLFAA), 290-310 (VIGLFVAGIYVCALLAHLPMF), and 323-343 (FEFLGYAVAAAFILTWTGALL).

It belongs to the NiCoT transporter (TC 2.A.52) family.

The protein localises to the cell membrane. Its activity is regulated as follows. Cobalt uptake is inhibited by uncouplers (CCCP and 3,5-di-tert-butyl-4-hydroxybenzylidenemalononitrile) and by the addition of excess nickel. Its function is as follows. Mediates energy-dependent uptake of cobalt ions into the cell. Can also transport nickel ions, but cobalt is the preferred substrate. This Rhodococcus rhodochrous protein is Cobalt transport protein NhlF (nhlF).